The primary structure comprises 520 residues: Ubiquitin carboxyl-terminal hydrolase 3 (520 aa).

At M1 the chain carries N-acetylmethionine. The UBP-type zinc finger occupies 1-121; the sequence is MECPHLSSSV…QKVREHLQNL (121 aa). 12 residues coordinate Zn(2+): C3, H5, C29, C32, C41, C44, C49, H56, H60, H82, C95, and C98. Residues 159 to 511 form the USP domain; sequence TGLRNLGNTC…KAYILFYVER (353 aa). The active-site Nucleophile is C168. The active-site Proton acceptor is the H471.

This sequence belongs to the peptidase C19 family. USP3 subfamily. As to quaternary structure, interacts (via UBP-type domain) with H2A; the interaction is less efficient than with monoubiquitinated H2A.

It is found in the nucleus. Its subcellular location is the cytoplasm. The catalysed reaction is Thiol-dependent hydrolysis of ester, thioester, amide, peptide and isopeptide bonds formed by the C-terminal Gly of ubiquitin (a 76-residue protein attached to proteins as an intracellular targeting signal).. Functionally, deubiquitinase that plays a role in several cellular processes including transcriptional regulation, cell cycle progression or innate immunity. In response to DNA damage, deubiquitinates monoubiquitinated target proteins such as histone H2A and H2AX and thereby counteracts RNF168- and RNF8-mediated ubiquitination. In turn, participates in the recruitment of DNA damage repair factors to DNA break sites. Required for proper progression through S phase and subsequent mitotic entry. Acts as a positive regulator of TP53 by deubiquitinating and stabilizing it to promote normal cell proliferation and transformation. Participates in establishing tolerance innate immune memory through non-transcriptional feedback. Mechanistically, negatively regulates TLR-induced NF-kappa-B signaling by targeting and removing the 'Lys-63'-linked polyubiquitin chains on MYD88. Negatively regulates the activation of type I interferon signaling by mediating 'Lys-63'-linked polyubiquitin chains on RIGI and IFIH1. Also deubiquinates ASC/PYCARD, the central adapter mediating the assembly and activation of most inflammasomes, and thereby promotes inflammasome activation. This is Ubiquitin carboxyl-terminal hydrolase 3 (Usp3) from Mus musculus (Mouse).